The chain runs to 322 residues: Pilin gene-inverting protein (322 aa).

May be the site-specific invertase required for pilin gene inversion. Moraxella can express either a Q or I pilin; the inversion of 2 kb of DNA determines which pilin is expressed. The chain is Pilin gene-inverting protein (piv) from Moraxella bovis.